We begin with the raw amino-acid sequence, 301 residues long: uncharacterized protein (301 aa).

The protein belongs to the asfivirus E301R family. In terms of assembly, interacts with host IRF3.

Functionally, plays a role in the inhibition of host innate immune system by acting as a negatively regulator of type I interferon production. Mechanistically, interacts with and prevents host IRF3 nuclear localization to inhibit its transcriptional activity. This is an uncharacterized protein from Ornithodoros (relapsing fever ticks).